A 203-amino-acid polypeptide reads, in one-letter code: N-(5'-phosphoribosyl)anthranilate isomerase (203 aa).

The protein belongs to the TrpF family.

The catalysed reaction is N-(5-phospho-beta-D-ribosyl)anthranilate = 1-(2-carboxyphenylamino)-1-deoxy-D-ribulose 5-phosphate. It participates in amino-acid biosynthesis; L-tryptophan biosynthesis; L-tryptophan from chorismate: step 3/5. The sequence is that of N-(5'-phosphoribosyl)anthranilate isomerase from Sulfurihydrogenibium sp. (strain YO3AOP1).